A 105-amino-acid chain; its full sequence is V-type ATP synthase subunit F (105 aa).

The protein belongs to the V-ATPase F subunit family.

In terms of biological role, produces ATP from ADP in the presence of a proton gradient across the membrane. This Clostridium perfringens (strain 13 / Type A) protein is V-type ATP synthase subunit F.